The following is a 200-amino-acid chain: Anthranilate synthase component 2 (200 aa).

The region spanning 3–196 is the Glutamine amidotransferase type-1 domain; the sequence is NILLLDNIDS…IHWASLKYIT (194 aa). 57 to 59 contributes to the L-glutamine binding site; the sequence is GPS. The active-site Nucleophile; for GATase activity is the Cys84. Residues Gln88 and 134 to 135 contribute to the L-glutamine site; that span reads SL. Residues His170 and Glu172 each act as for GATase activity in the active site.

In terms of assembly, heterotetramer consisting of two non-identical subunits: a beta subunit (TrpG) and a large alpha subunit (TrpE).

It catalyses the reaction chorismate + L-glutamine = anthranilate + pyruvate + L-glutamate + H(+). The protein operates within amino-acid biosynthesis; L-tryptophan biosynthesis; L-tryptophan from chorismate: step 1/5. Its function is as follows. Part of a heterotetrameric complex that catalyzes the two-step biosynthesis of anthranilate, an intermediate in the biosynthesis of L-tryptophan. In the first step, the glutamine-binding beta subunit (TrpG) of anthranilate synthase (AS) provides the glutamine amidotransferase activity which generates ammonia as a substrate that, along with chorismate, is used in the second step, catalyzed by the large alpha subunit of AS (TrpE) to produce anthranilate. In the absence of TrpG, TrpE can synthesize anthranilate directly from chorismate and high concentrations of ammonia. This is Anthranilate synthase component 2 (trpG) from Buchnera aphidicola subsp. Acyrthosiphon pisum (strain APS) (Acyrthosiphon pisum symbiotic bacterium).